We begin with the raw amino-acid sequence, 88 residues long: MSSFDKTMKFNFSDDSMETNVNEVLITVHDALQEKGYNPINQIVGYLLSGDPAYIPRHRDARNLIRKIERDEIIEELVKSYLEQHKEA.

The protein belongs to the UPF0297 family.

In Bacillus licheniformis (strain ATCC 14580 / DSM 13 / JCM 2505 / CCUG 7422 / NBRC 12200 / NCIMB 9375 / NCTC 10341 / NRRL NRS-1264 / Gibson 46), this protein is UPF0297 protein BLi02868/BL02032.